The following is a 169-amino-acid chain: E1B protein, small T-antigen (169 aa).

Residues 147 to 169 (GSVVEEEQGEEHLARDSDDPFFD) are disordered. Residues 156–169 (EEHLARDSDDPFFD) are compositionally biased toward basic and acidic residues.

Belongs to the adenoviridae E1B 19 kDa protein family.

The sequence is that of E1B protein, small T-antigen from Canine adenovirus serotype 1 (strain Glaxo) (CAdV-1).